The following is a 717-amino-acid chain: Serine/threonine-protein kinase STE11 (717 aa).

Residues 20 to 84 form the SAM domain; the sequence is NDLPFVQLFL…LRKSKSFQRD (65 aa). The residue at position 323 (S323) is a Phosphoserine. A Protein kinase domain is found at 415 to 712; that stretch reads WLKGACIGSG…ALELLQHPWL (298 aa). Residues 421 to 429 and K444 contribute to the ATP site; that span reads IGSGSFGSV. The segment covering 452 to 466 has biased composition (polar residues); that stretch reads NIGVPTDNNKQANSD. The interval 452–481 is disordered; the sequence is NIGVPTDNNKQANSDENNEQEEQQEKIEDV. S465 carries the post-translational modification Phosphoserine. Catalysis depends on D579, which acts as the Proton acceptor.

This sequence belongs to the protein kinase superfamily. STE Ser/Thr protein kinase family. MAP kinase kinase kinase subfamily. Homodimer. Interacts (via SAM domain) with STE50 (via SAM domain). Interacts with PBS2 and SHO1.

The enzyme catalyses L-seryl-[protein] + ATP = O-phospho-L-seryl-[protein] + ADP + H(+). It carries out the reaction L-threonyl-[protein] + ATP = O-phospho-L-threonyl-[protein] + ADP + H(+). In terms of biological role, serine/threonine protein kinase required for cell-type-specific transcription and signal transduction in yeast. It is thought that it phosphorylates the STE7 protein kinase which itself, phosphorylates the FUS3 and or KSS1 kinases. This chain is Serine/threonine-protein kinase STE11 (STE11), found in Saccharomyces cerevisiae (strain ATCC 204508 / S288c) (Baker's yeast).